We begin with the raw amino-acid sequence, 523 residues long: Lysine--tRNA ligase (523 aa).

The 'HIGH' region signature appears at P30–N38. Zn(2+) is bound by residues D95, C99, H100, H106, C177, H180, C199, and H203. Positions K279 to S283 match the 'KMSKS' region motif.

This sequence belongs to the class-I aminoacyl-tRNA synthetase family. The cofactor is Zn(2+).

The protein resides in the cytoplasm. It catalyses the reaction tRNA(Lys) + L-lysine + ATP = L-lysyl-tRNA(Lys) + AMP + diphosphate. The protein is Lysine--tRNA ligase (lysS) of Pyrococcus horikoshii (strain ATCC 700860 / DSM 12428 / JCM 9974 / NBRC 100139 / OT-3).